Here is a 459-residue protein sequence, read N- to C-terminus: cAMP-dependent protein kinase regulatory subunit (459 aa).

The tract at residues 30–219 (QFCANYFNTK…TLANNLKNNF (190 aa)) is dimerization and phosphorylation. Disordered regions lie at residues 78–109 (VNDR…DTKT) and 125–168 (FDVK…PSSK). Basic and acidic residues predominate over residues 95–109 (HSNHDEDPHAKDTKT). A compositionally biased stretch (low complexity) spans 146-168 (KPSSSSQPNQQSASASSKTPSSK). Ser-180 is modified (phosphoserine). 3',5'-cyclic AMP-binding positions include 220-335 (LFKQ…FLKD), Glu-285, Arg-294, 338-454 (VLKS…KSQD), Glu-404, and Arg-413.

The protein belongs to the cAMP-dependent kinase regulatory chain family. Tetramer, composed of 2 regulatory (R) and 2 catalytic (C) subunits. In the presence of cAMP it dissociates into 2 active monomeric C subunits and an R dimer.

The polypeptide is cAMP-dependent protein kinase regulatory subunit (BCY1) (Candida albicans (strain SC5314 / ATCC MYA-2876) (Yeast)).